The sequence spans 136 residues: Large ribosomal subunit protein uL16 (136 aa).

The protein belongs to the universal ribosomal protein uL16 family. Part of the 50S ribosomal subunit.

Functionally, binds 23S rRNA and is also seen to make contacts with the A and possibly P site tRNAs. This is Large ribosomal subunit protein uL16 from Shewanella woodyi (strain ATCC 51908 / MS32).